A 681-amino-acid chain; its full sequence is CAI-1 autoinducer sensor kinase/phosphatase CqsS (681 aa).

4 consecutive transmembrane segments (helical) span residues 17–37 (LVGWMGFIGFPIYYIVWEFMF), 73–93 (AYYQVVTTLCLPCFFFYMLLM), 112–132 (ILLVHITSVMFVQTFVGIGLA), and 148–168 (MDWTHVPIFLFIYLFGNLFYF). One can recognise a Histidine kinase domain in the interval 187-413 (GIAHEMRNPL…QFTMTFPTIG (227 aa)). H190 is subject to Phosphohistidine; by autocatalysis. The Response regulatory domain occupies 564 to 681 (TIMVVDDNES…RLFDKIANWI (118 aa)). A 4-aspartylphosphate modification is found at D613.

The protein resides in the cell membrane. The catalysed reaction is ATP + protein L-histidine = ADP + protein N-phospho-L-histidine.. Its function is as follows. Senses the quorum-sensing autoinducer CAI-1 ((S)-3-hydroxytridecan-4-one) which probably functions as an intragenus signal. The sensory signal is then relayed to LuxU and LuxO. The polypeptide is CAI-1 autoinducer sensor kinase/phosphatase CqsS (cqsS) (Vibrio campbellii (strain ATCC BAA-1116)).